A 130-amino-acid polypeptide reads, in one-letter code: Small ribosomal subunit protein uS11 (130 aa).

The protein belongs to the universal ribosomal protein uS11 family. Part of the 30S ribosomal subunit. Interacts with proteins S7 and S18. Binds to IF-3.

Its function is as follows. Located on the platform of the 30S subunit, it bridges several disparate RNA helices of the 16S rRNA. Forms part of the Shine-Dalgarno cleft in the 70S ribosome. The polypeptide is Small ribosomal subunit protein uS11 (Campylobacter fetus subsp. fetus (strain 82-40)).